The sequence spans 421 residues: RNA exonuclease 4 (421 aa).

2 disordered regions span residues 1–51 (MAKA…ETKK) and 79–179 (ENQA…QPPK). The span at 11 to 24 (SPCSGSLGKTANTP) shows a compositional bias: polar residues. Positions 25-36 (KQKRKQKQRKFW) are enriched in basic residues. 3 stretches are compositionally biased toward basic and acidic residues: residues 92-107 (PKKDQKVSEKKTEESV), 140-149 (AAEKSDEVSK), and 161-170 (DTEHQGKKPQ). An Exonuclease domain is found at 234-385 (TVAMDCEMVG…QDAQAAMRLY (152 aa)).

This sequence belongs to the REXO4 family.

It localises to the nucleus. The sequence is that of RNA exonuclease 4 (rexo4) from Xenopus laevis (African clawed frog).